Here is a 121-residue protein sequence, read N- to C-terminus: C-X-C motif chemokine 11-6 (121 aa).

Residues 1 to 20 (MKTLAAFLLLSCLIAGEVNG) form the signal peptide. 2 disulfides stabilise this stretch: Cys-29–Cys-56 and Cys-31–Cys-73. The interval 95-121 (QSVPHSTTTGTVKSSMTSSTSAPTAFK) is disordered. The segment covering 100-115 (STTTGTVKSSMTSSTS) has biased composition (low complexity).

It belongs to the intercrine alpha (chemokine CxC) family.

The protein resides in the secreted. In terms of biological role, ligand for cxcr3.2. Chemotactic for macrophages. The sequence is that of C-X-C motif chemokine 11-6 from Danio rerio (Zebrafish).